A 101-amino-acid polypeptide reads, in one-letter code: NADH-quinone oxidoreductase subunit K (101 aa).

3 helical membrane passes run 4–24, 30–50, and 61–81; these read LPHY…GIFV, IVIL…LVAF, and IFAM…LAIL.

The protein belongs to the complex I subunit 4L family. As to quaternary structure, NDH-1 is composed of 14 different subunits. Subunits NuoA, H, J, K, L, M, N constitute the membrane sector of the complex.

The protein resides in the cell inner membrane. It catalyses the reaction a quinone + NADH + 5 H(+)(in) = a quinol + NAD(+) + 4 H(+)(out). NDH-1 shuttles electrons from NADH, via FMN and iron-sulfur (Fe-S) centers, to quinones in the respiratory chain. The immediate electron acceptor for the enzyme in this species is believed to be ubiquinone. Couples the redox reaction to proton translocation (for every two electrons transferred, four hydrogen ions are translocated across the cytoplasmic membrane), and thus conserves the redox energy in a proton gradient. The polypeptide is NADH-quinone oxidoreductase subunit K (Caulobacter vibrioides (strain ATCC 19089 / CIP 103742 / CB 15) (Caulobacter crescentus)).